Reading from the N-terminus, the 487-residue chain is Glutamyl-tRNA(Gln) amidotransferase subunit A (487 aa).

Catalysis depends on charge relay system residues lysine 78 and serine 153. Serine 177 serves as the catalytic Acyl-ester intermediate.

The protein belongs to the amidase family. GatA subfamily. As to quaternary structure, heterotrimer of A, B and C subunits.

The catalysed reaction is L-glutamyl-tRNA(Gln) + L-glutamine + ATP + H2O = L-glutaminyl-tRNA(Gln) + L-glutamate + ADP + phosphate + H(+). Allows the formation of correctly charged Gln-tRNA(Gln) through the transamidation of misacylated Glu-tRNA(Gln) in organisms which lack glutaminyl-tRNA synthetase. The reaction takes place in the presence of glutamine and ATP through an activated gamma-phospho-Glu-tRNA(Gln). The chain is Glutamyl-tRNA(Gln) amidotransferase subunit A from Oleidesulfovibrio alaskensis (strain ATCC BAA-1058 / DSM 17464 / G20) (Desulfovibrio alaskensis).